Here is a 107-residue protein sequence, read N- to C-terminus: uncharacterized protein (107 aa).

3 helical membrane-spanning segments follow: residues 15 to 35 (TGSYNWFDHFFLCVYLALGIS), 43 to 63 (LYRVCFIFLFTGGFFLFWLSY), and 87 to 107 (YFPSSTWIAVLVFSWRHIFCF).

Its subcellular location is the membrane. This is an uncharacterized protein from Saccharomyces cerevisiae (strain ATCC 204508 / S288c) (Baker's yeast).